The primary structure comprises 156 residues: Small ribosomal subunit protein uS7 (156 aa).

The protein belongs to the universal ribosomal protein uS7 family. In terms of assembly, part of the 30S ribosomal subunit. Contacts proteins S9 and S11.

In terms of biological role, one of the primary rRNA binding proteins, it binds directly to 16S rRNA where it nucleates assembly of the head domain of the 30S subunit. Is located at the subunit interface close to the decoding center, probably blocks exit of the E-site tRNA. The polypeptide is Small ribosomal subunit protein uS7 (Acetivibrio thermocellus (strain ATCC 27405 / DSM 1237 / JCM 9322 / NBRC 103400 / NCIMB 10682 / NRRL B-4536 / VPI 7372) (Clostridium thermocellum)).